A 248-amino-acid chain; its full sequence is MAGHSQFANIKHRKGAQDAKRAQKFTKLIREIIVAAKQGLPDPEFNSRLRSAIIAAKKENLPKDRIDAAIKSATGNTQTDNYEEVVYEGYGPGNIALMIQTLTNNRNRTAAELRHALSKYNGKLGESGSVSFLFNHVGVIAYKASSIDSFDSLFNTAIELHALDVEEIIQDDTQEKIYYVICNVQDFGNVRDQLFHKFSDAEFSRLFWKASDTVKIEDEEIQKKISNLMDLLENNDDVQYIDSNFTFY.

A disordered region spans residues 1–21 (MAGHSQFANIKHRKGAQDAKR).

Belongs to the TACO1 family.

It localises to the cytoplasm. The protein is Probable transcriptional regulatory protein ECH_0704 of Ehrlichia chaffeensis (strain ATCC CRL-10679 / Arkansas).